Reading from the N-terminus, the 193-residue chain is MSFLWDWFNGVLNMLGLANKKGKLVFLGLDNAGKTTLLHMLKDDRIAQHVPTLHPTSEQMSLGGISFTTYDLGGHAQARRVWKDYFPAVDAVVFLIDVADAERMQESRVELESLLQDEQIASVPVLILGNKIDKPGALSEDQLKWQLNIQHMCTGKGDVSRNEMASRPMEVFMCSVLQRQGYGEGIRWLGQYL.

Residues phenylalanine 3–tryptophan 5 carry the STAR; SAR1-N-terminal activation recruitment. Required for the activation and subsequent recruitment to ER membrane motif. The segment at valine 11 to leucine 15 is mediates recruitment to ER membranes. A Mg(2+)-binding site is contributed by aspartate 30. Positions 31, 32, 33, 34, 35, and 36 each coordinate GDP. Residue asparagine 31 participates in GTP binding. Positions 33, 34, 35, and 36 each coordinate GTP. Aspartate 71 contacts Mg(2+). GDP contacts are provided by asparagine 130, lysine 131, aspartate 133, valine 176, and leucine 177. Residues asparagine 130, lysine 131, aspartate 133, valine 176, and leucine 177 each coordinate GTP.

Belongs to the small GTPase superfamily. SAR1 family. As to quaternary structure, homodimer; upon association with membrane. Part of the coat protein complex II/COPII, composed of SEC23/24 and SEC13/31 heterodimers, that it helps recruit and assemble on endoplasmic reticulum (ER) membranes at ER exit sites.

It localises to the endoplasmic reticulum membrane. The protein resides in the golgi apparatus. It is found in the golgi stack membrane. The protein localises to the cytoplasm. Its subcellular location is the cytosol. It catalyses the reaction GTP + H2O = GDP + phosphate + H(+). Small GTPases activation is mediated by guanine exchange factors (GEF), while inactivation through hydrolysis of the bound GTP is stimulated by GTPase activating proteins (GAP). Functionally, small GTPase that cycles between an active GTP-bound and an inactive GDP-bound state and mainly functions in vesicle-mediated endoplasmic reticulum (ER) to Golgi transport. The active GTP-bound form inserts into the endoplasmic reticulum membrane where it recruits the remainder of the coat protein complex II/COPII. The coat protein complex II assembling and polymerizing on endoplasmic reticulum membrane is responsible for both the sorting of cargos and the deformation and budding of membranes into vesicles destined to the Golgi. Plays a role in transporting the tyrosine kinase receptor let-23 from the endoplasmic reticulum to the plasma membrane of vulval precursor cells. This chain is Small COPII coat GTPase SAR1, found in Caenorhabditis elegans.